An 885-amino-acid polypeptide reads, in one-letter code: MTTLSPEAFAGHTPMMQQYLRIKADHPDTLVFYRMGDFYELFFEDAEKAARLLDLTLTQRGASAGTPIKMAGVPHHAVEQYLAKLVKMGESVAICEQIGDPATSKGPVERKVVRVVTPGTLTDAALLSDKNDVYLLAMCTGHNKRGVAVNIGLAWLNLASGALRLAEIEPDQLAAALERIRPAEILTPDGATDAIPAGAGASKRVPAWHFDIASGTQRLCDQLDVASLDGFGAHSLTSACGAAGALLLYAAATQGQQLRHVRSLKVENETEYIGLDPATRRNLELTETLRGTESPTLYSLLDTCCTTMGSRLLRHWLHHPPRASVAAQSRQQAIGALLDAPANASLDALRSALRQIADVERITGRLALLSARPRDLSSLRDTFAALPALRERISAIVANADALARVDAALAPPAECLDLLTSAIAPEPAAMVRDGGVIARGYDAELDELRDISENCGQFLIDLEARERARTGIANLRVEYNKVHGFYIEVTRGQTDKVPDDYRRRQTLKNAERYITPELKTFEDKALSAQERALARERALYDSVLQALLPFIPECQRVASALAELDLLAAFAERARALDWVAPTFTDEIGIEIEQGRHPVVEAQVEQFIANDCRFGTERKLLLITGPNMGGKSTFMRQTALIALMAYVGSYVPAKSACFGPIDRIFTRIGAADDLAGGRSTFMVEMTEAAAILNDATPQSLVLMDEIGRGTSTFDGLALAWAIARHLLAHNACYTLFATHYFELTQLPAEFPQAANVHLSAVEHGHGIVFLHAVNEGPANQSYGLQVAQLAGVPAPVIRAARKHLAYLEQQSASQHTPQLDLFSAPPAAVDDLECADAPALPDTPHPALEKLRDIDPDDLKPREALDLLYELRTLVRSHDADGHA.

626-633 (GPNMGGKS) is an ATP binding site.

The protein belongs to the DNA mismatch repair MutS family.

In terms of biological role, this protein is involved in the repair of mismatches in DNA. It is possible that it carries out the mismatch recognition step. This protein has a weak ATPase activity. The protein is DNA mismatch repair protein MutS of Burkholderia orbicola (strain MC0-3).